The sequence spans 301 residues: Glutamyl-Q tRNA(Asp) synthetase (301 aa).

Residues 9–13 (RFAPS) and glutamate 45 contribute to the L-glutamate site. Positions 12 to 22 (PSPTGPLHLGS) match the 'HIGH' region motif. Zn(2+)-binding residues include cysteine 101, cysteine 103, tyrosine 121, and cysteine 125. The L-glutamate site is built by tyrosine 179 and arginine 197. The 'KMSKS' region motif lies at 235 to 239 (KLSKQ). Lysine 238 is a binding site for ATP.

It belongs to the class-I aminoacyl-tRNA synthetase family. GluQ subfamily. The cofactor is Zn(2+).

In terms of biological role, catalyzes the tRNA-independent activation of glutamate in presence of ATP and the subsequent transfer of glutamate onto a tRNA(Asp). Glutamate is transferred on the 2-amino-5-(4,5-dihydroxy-2-cyclopenten-1-yl) moiety of the queuosine in the wobble position of the QUC anticodon. The polypeptide is Glutamyl-Q tRNA(Asp) synthetase (Thiobacillus denitrificans (strain ATCC 25259 / T1)).